A 368-amino-acid polypeptide reads, in one-letter code: Core-capsid bridging protein (368 aa).

2 disordered regions span residues 17 to 49 (EIYGPPKKEEQDYKPRKLKRVKKKKKDDDDELD) and 307 to 340 (GYRGYTYRPRRRATTRRRTTTGTRRRRRRRQPVL). Over residues 22–31 (PKKEEQDYKP) the composition is skewed to basic and acidic residues. Basic residues-rich tracts occupy residues 32 to 41 (RKLKRVKKKK) and 314 to 337 (RPRRRATTRRRTTTGTRRRRRRRQ).

Belongs to the adenoviridae core-capsid bridging protein family. Monomer. Homodimer. Exists in equilibrium between monomers and dimers in solution. Interacts with the histone-like nucleoprotein; this interactions bridge the virus core to the capsid. Interacts with core protein X; this interactions bridge the virus core to the capsid. Interacts with the endosome lysis protein VI; this interactions bridge the virus core to the capsid. Interacts with the peripentonal hexons. Interacts with host NPM1; this interaction might play a role in virus assembly. During virion entry, is ubiquitinated at the nuclear pore complex by host MIB1. This dissociates viral genomic DNA from capsid and allows genome delivery into nucleus for infection.

It localises to the virion. It is found in the host nucleus. Its subcellular location is the host nucleolus. Associates loosely with the viral DNA to form an outer shell around the nucleoprotein-DNA complex and links it with the capsid by binding the endosome lysis protein. During entry, secures the viral genome in the capsid until it reaches the nuclear pore complex, preventing innate immunity responses. Dissociates from the viral genome at nuclear pore. Might be involved in nuclear capsid assembly of the viral particles through its association with NPM1/nucleophosmin. This Human adenovirus C serotype 5 (HAdV-5) protein is Core-capsid bridging protein.